A 263-amino-acid polypeptide reads, in one-letter code: Ribosomal RNA large subunit methyltransferase E (263 aa).

The disordered stretch occupies residues 1–34 (MSSAEGPKSGGGSKGSKSEASSRVRGSAPTGSRD). G102, W104, D126, D142, and D166 together coordinate S-adenosyl-L-methionine. Catalysis depends on K206, which acts as the Proton acceptor.

The protein belongs to the class I-like SAM-binding methyltransferase superfamily. RNA methyltransferase RlmE family.

Its subcellular location is the cytoplasm. The enzyme catalyses uridine(2552) in 23S rRNA + S-adenosyl-L-methionine = 2'-O-methyluridine(2552) in 23S rRNA + S-adenosyl-L-homocysteine + H(+). Functionally, specifically methylates the uridine in position 2552 of 23S rRNA at the 2'-O position of the ribose in the fully assembled 50S ribosomal subunit. The protein is Ribosomal RNA large subunit methyltransferase E of Rhodospirillum rubrum (strain ATCC 11170 / ATH 1.1.1 / DSM 467 / LMG 4362 / NCIMB 8255 / S1).